Here is a 201-residue protein sequence, read N- to C-terminus: IMP cyclohydrolase (201 aa).

The protein belongs to the archaeal IMP cyclohydrolase family.

The catalysed reaction is IMP + H2O = 5-formamido-1-(5-phospho-D-ribosyl)imidazole-4-carboxamide. Its pathway is purine metabolism; IMP biosynthesis via de novo pathway; IMP from 5-formamido-1-(5-phospho-D-ribosyl)imidazole-4-carboxamide: step 1/1. Its function is as follows. Catalyzes the cyclization of 5-formylamidoimidazole-4-carboxamide ribonucleotide to IMP. This Methanococcus maripaludis (strain C6 / ATCC BAA-1332) protein is IMP cyclohydrolase.